Consider the following 431-residue polypeptide: Histidine--tRNA ligase (431 aa).

Belongs to the class-II aminoacyl-tRNA synthetase family. Homodimer.

Its subcellular location is the cytoplasm. It carries out the reaction tRNA(His) + L-histidine + ATP = L-histidyl-tRNA(His) + AMP + diphosphate + H(+). The protein is Histidine--tRNA ligase of Limosilactobacillus fermentum (strain NBRC 3956 / LMG 18251) (Lactobacillus fermentum).